The primary structure comprises 311 residues: MFHHISVMLNETIDYLNVKENGVYIDCTLGGAGHALYLLNQLNDDGRLIAIDQDQTAIDNAKEVLKDHLHRVTFVHSNFRELTQILKDLNIEKVDGIYYDLGVSSPQLDIPERGFSYHHDATLDMRMDQTQELTAYEIVNNWSYEALVKIFYRYGEEKFSKQIARRIEAHREQQPITTTLELVDIIKEGIPAKARRKGGHPAKRVFQALRIAVNDELSAFEDSIEQAIELVKVDGRISVITFHSLEDRLCKQVFQEYEKGPEVPRGLPVIPEAYTPKLKRVNRKPITATEEDLDDNNRARSAKLRVAEILK.

S-adenosyl-L-methionine-binding positions include 32–34 (AGH), aspartate 52, phenylalanine 79, aspartate 100, and glutamine 107.

Belongs to the methyltransferase superfamily. RsmH family.

Its subcellular location is the cytoplasm. The enzyme catalyses cytidine(1402) in 16S rRNA + S-adenosyl-L-methionine = N(4)-methylcytidine(1402) in 16S rRNA + S-adenosyl-L-homocysteine + H(+). In terms of biological role, specifically methylates the N4 position of cytidine in position 1402 (C1402) of 16S rRNA. This Staphylococcus aureus (strain COL) protein is Ribosomal RNA small subunit methyltransferase H.